Here is a 376-residue protein sequence, read N- to C-terminus: MSIRLTNISKKFGQFQALSPLNLDIQEGEMIGLLGPSGSGKTTLLRIIAGLEGADSGHIHFGNRDVTQVHVRDRRVGFVFQNYALFRHMTVADNVAFGLEVIPKKQRPSAAEIQKRVSHLLEMVQLGHLAQRYPEQLSGGQKQRIALARALATQPEVLLLDEPFGALDAKVRKELRRWLRSLHDELKFTSVFVTHDQDEALELSDRVVVMSNGNIEQVNTPIELYAQPNSRFVFDFLGNVNRFEANWQQNRWTNGDAFIVPPEQTPLQQNGALYVRSHELALADKPNSQAHIPFTIVAITPIGAEVRVELAPIGWQSEELWEAKFTHHHLQELGLQKGSVVYATPRTGYFFGKQGDGSPIRQSWPFLPPGSLAFDI.

The region spanning 3 to 237 (IRLTNISKKF…PNSRFVFDFL (235 aa)) is the ABC transporter domain. 35 to 42 (GPSGSGKT) is a binding site for ATP.

Belongs to the ABC transporter superfamily. Sulfate/tungstate importer (TC 3.A.1.6) family. As to quaternary structure, the complex is composed of two ATP-binding proteins (CysA), two transmembrane proteins (CysT and CysW) and a solute-binding protein (CysP).

The protein localises to the cell inner membrane. The enzyme catalyses sulfate(out) + ATP + H2O = sulfate(in) + ADP + phosphate + H(+). The catalysed reaction is thiosulfate(out) + ATP + H2O = thiosulfate(in) + ADP + phosphate + H(+). Its function is as follows. Part of the ABC transporter complex CysAWTP involved in sulfate/thiosulfate import. Responsible for energy coupling to the transport system. This is Sulfate/thiosulfate import ATP-binding protein CysA 1 from Shewanella oneidensis (strain ATCC 700550 / JCM 31522 / CIP 106686 / LMG 19005 / NCIMB 14063 / MR-1).